Consider the following 115-residue polypeptide: Large ribosomal subunit protein bL19 (115 aa).

The protein belongs to the bacterial ribosomal protein bL19 family.

This protein is located at the 30S-50S ribosomal subunit interface and may play a role in the structure and function of the aminoacyl-tRNA binding site. This is Large ribosomal subunit protein bL19 from Desulforapulum autotrophicum (strain ATCC 43914 / DSM 3382 / VKM B-1955 / HRM2) (Desulfobacterium autotrophicum).